The following is a 550-amino-acid chain: Hydroxylamine reductase (550 aa).

[2Fe-2S] cluster-binding residues include cysteine 3, cysteine 6, cysteine 18, and cysteine 25. Hybrid [4Fe-2O-2S] cluster is bound by residues histidine 249, glutamate 273, cysteine 317, cysteine 405, cysteine 433, cysteine 458, glutamate 492, and lysine 494. Cysteine 405 carries the cysteine persulfide modification.

The protein belongs to the HCP family. [2Fe-2S] cluster is required as a cofactor. Hybrid [4Fe-2O-2S] cluster serves as cofactor.

It is found in the cytoplasm. It catalyses the reaction A + NH4(+) + H2O = hydroxylamine + AH2 + H(+). Its function is as follows. Catalyzes the reduction of hydroxylamine to form NH(3) and H(2)O. This chain is Hydroxylamine reductase, found in Pectobacterium carotovorum subsp. carotovorum (strain PC1).